The following is a 132-amino-acid chain: Small ribosomal subunit protein uS8 (132 aa).

Belongs to the universal ribosomal protein uS8 family. Part of the 30S ribosomal subunit. Contacts proteins S5 and S12.

Its function is as follows. One of the primary rRNA binding proteins, it binds directly to 16S rRNA central domain where it helps coordinate assembly of the platform of the 30S subunit. This is Small ribosomal subunit protein uS8 from Francisella philomiragia subsp. philomiragia (strain ATCC 25017 / CCUG 19701 / FSC 153 / O#319-036).